A 1457-amino-acid polypeptide reads, in one-letter code: MSVFTFGHGSNGALGLGKITDDTCPTPQKVNYFTEIDKRVKKVACGSYHTVFVTDDEHLYICGIKKDPKHGTTLFYTSPPPTTTTTTTTTSSTSATTTTTNGMVNEKNNNNKNNNGEKIVNSKPESVIIKDGASNTTNDSTSSSSTSTSSLSSSLPPTNIETPRDKKKPPIKLDKGIPHHRSTRELIQRPESPLLNKLLTSKAEMEFKHYESNEKSKDEMKDNENENEEDEDDDDDDSTIRQNEDKESSLIDDNESETSLRINKKDAENITNNIRLIKELDEQQQQPQQPQQNLKGIMNQPPLPTNDDLDEDPNIHFTPIRISTHFLENSPLNTIKQVALGNYHIVLLTEGGNVWTWGSNSNGQLGYLVDTQQQQQQQLQQQQSMSSLQPSASSSSPSSSSLQTTCTPKMVEIKCVKYIATGVKNTAALTEWGELYMWGINEHGELGLGDTIDRRTPTRVIRLKNEVVSTIACSSTHSACYTESGKMYVWGQSDETGKIQAIPSPLPIHSYLDREIKSPNGGGVGGFFGGGGKIKQLACGQRCIAVLTQMGEVFMWEIPGIPIPLRNALENHSVRNIVMGNFHLVCLTDSGEVVTIGRNKTGQLGRTDAENEPGIVKQLSFDPDGLNSDEFVVSIAAGEFHSVALVENTPKTKLALQLVRMQRNYLRQLNILNNIYYKSMMSMASPYDPVVLSMMNNGSASTLPPSLKGLSGGLPDNANNTIKNGKDKDNHHNGDSNGHHSNGHYHGNGNNGNNSITTSNSISSPSLLGSGGTLKSRSASIATIRGLFGINHMLHHSQSQSFQEENSTVTEDEIKEIFSDIEALSKLTEKFLSYLDQRMDNWDPVSKVLGDIFLDEALMAAYRIYIPYSDSYNTSCMTLFNIRRRNERLSNIIKDCEKKSKSFGVKLDQEFVKEIDLKSLLLSPLQNIPRIYILLRELGSDDSGNINPRDIDLINFAATKFQVLLERMNQNFQFVNAVEILHCSSNEYGNPQIMGGSLPQLVDKLTHHNISDPNFRDVFLLTFRAFTTPCNLFDLLVETFQRQKHLKNGRVVNVITSWVVHHFYDFEKDKLSDFTQDPNHNPQLLSEKLEQFIYSEDHQSVSQIKLQYFSHRKRLESSINLIDNQKLTQNEITTPPPLQIQNNNQNNNLENNNNNNNNNNTTTTTTTPNDNINDINNNNNNNNNNNNNNNNNNNNNNNNNNNNNNNNNLTNSTIKLVVQPPIPINFNLLDSQPIEVAQTLTIMDHHYFAMIDKREFLGQRWAKNKSPNIQISTDHFNRTSQVVVTEILKSKNSKQRSATLGYFISVAYCCFELNNLSGTASIIYGLNSASIQRLKKSWSKLPKESMIAFEYLDKIVTPMKNYISLRHLMTTIQPPCVPFLGTYLKDLTFIEEGNPSIIGGLINFYKQRKIAEVIFQIQQHQQVVYSAIRSNPTIKAFLMSSHTFDDKQAQKISSEAE.

One copy of the RCC1 1 repeat lies at methionine 1 to aspartate 55. 4 disordered regions span residues phenylalanine 75–asparagine 196, histidine 209–lysine 264, glutamate 282–proline 313, and glutamine 376–threonine 404. Low complexity-rich tracts occupy residues threonine 83–asparagine 121 and serine 134–threonine 158. Basic and acidic residues-rich tracts occupy residues isoleucine 171–glutamine 188 and histidine 209–glutamate 224. Over residues asparagine 225–aspartate 237 the composition is skewed to acidic residues. Over residues serine 238 to serine 249 the composition is skewed to basic and acidic residues. Low complexity-rich tracts occupy residues glutamine 283–glutamine 292 and glutamine 376–glutamine 403. RCC1 repeat units lie at residues glycine 351–serine 401, tryptophan 432–glutamate 483, glycine 485–glutamine 549, and serine 590–glutamate 647. A DH domain is found at proline 650 to asparagine 971. Over residues leucine 703–proline 715 the composition is skewed to low complexity. The disordered stretch occupies residues leucine 703–isoleucine 762. Residues asparagine 724–glycine 738 are compositionally biased toward basic and acidic residues. The segment covering histidine 739–isoleucine 762 has biased composition (low complexity). The region spanning glycine 989–phenylalanine 1109 is the N-terminal Ras-GEF domain. A disordered region spans residues leucine 1127–threonine 1210. Residues leucine 1138 to asparagine 1211 are a coiled coil. Residues asparagine 1142–threonine 1210 show a composition bias toward low complexity. The Ras-GEF domain maps to glutamine 1232–serine 1454.

In terms of biological role, promotes the exchange of Ras-bound GDP by GTP. In Dictyostelium discoideum (Social amoeba), this protein is Ras guanine nucleotide exchange factor C (gefC).